We begin with the raw amino-acid sequence, 750 residues long: GTP pyrophosphokinase rsh (750 aa).

The HD domain maps to Y45–M144. Residues D390–R451 enclose the TGS domain. The tract at residues A587 to L613 is disordered. Positions R676–G750 constitute an ACT domain.

Belongs to the RelA/SpoT family.

The enzyme catalyses GTP + ATP = guanosine 3'-diphosphate 5'-triphosphate + AMP. Functionally, functions as a (p)ppGpp synthase. In eubacteria ppGpp (guanosine 3'-diphosphate 5'-diphosphate) is a mediator of the stringent response that coordinates a variety of cellular activities in response to changes in nutritional abundance. Plays a role in adaptation of Brucella to its intracellular host environment. This chain is GTP pyrophosphokinase rsh (rsh), found in Brucella ovis (strain ATCC 25840 / 63/290 / NCTC 10512).